A 1193-amino-acid polypeptide reads, in one-letter code: DNA polymerase (1193 aa).

A disordered region spans residues Met-1 to Val-88. A compositionally biased stretch (low complexity) spans Pro-48–Pro-68.

Belongs to the DNA polymerase type-B family. Heterodimer with the terminal protein; this heterodimer binds to bp 9 to 18 of the genome. Forms a complex with viral pTP, DBP and hosts NFIA and POU2F1/OCT1 for initiation of replication.

It is found in the host nucleus. The enzyme catalyses DNA(n) + a 2'-deoxyribonucleoside 5'-triphosphate = DNA(n+1) + diphosphate. Eukaryotic-type DNA polymerase involved in viral genomic replication. DNA synthesis is protein primed, and acts in a strand displacement replication. Assembles in complex with viral pTP, DBP, host NFIA and host POU2F1/OCT1 on viral origin of replication. The polymerase covalently transfers dCMP onto pTP, thereby initiating complementary strand synthesis. This Homo sapiens (Human) protein is DNA polymerase.